The sequence spans 367 residues: Chorismate synthase (367 aa).

An NADP(+)-binding site is contributed by R48. Residues 125-127 (RAS), G290, 305-309 (KPTSS), and R333 each bind FMN.

It belongs to the chorismate synthase family. As to quaternary structure, homotetramer. The cofactor is FMNH2.

The enzyme catalyses 5-O-(1-carboxyvinyl)-3-phosphoshikimate = chorismate + phosphate. It functions in the pathway metabolic intermediate biosynthesis; chorismate biosynthesis; chorismate from D-erythrose 4-phosphate and phosphoenolpyruvate: step 7/7. Catalyzes the anti-1,4-elimination of the C-3 phosphate and the C-6 proR hydrogen from 5-enolpyruvylshikimate-3-phosphate (EPSP) to yield chorismate, which is the branch point compound that serves as the starting substrate for the three terminal pathways of aromatic amino acid biosynthesis. This reaction introduces a second double bond into the aromatic ring system. This is Chorismate synthase from Protochlamydia amoebophila (strain UWE25).